Here is a 629-residue protein sequence, read N- to C-terminus: tRNA uridine 5-carboxymethylaminomethyl modification enzyme MnmG (629 aa).

Residue Gly13 to Gly18 coordinates FAD. Gly273 to Phe287 is an NAD(+) binding site.

This sequence belongs to the MnmG family. In terms of assembly, homodimer. Heterotetramer of two MnmE and two MnmG subunits. It depends on FAD as a cofactor.

The protein localises to the cytoplasm. Functionally, NAD-binding protein involved in the addition of a carboxymethylaminomethyl (cmnm) group at the wobble position (U34) of certain tRNAs, forming tRNA-cmnm(5)s(2)U34. The chain is tRNA uridine 5-carboxymethylaminomethyl modification enzyme MnmG from Tolumonas auensis (strain DSM 9187 / NBRC 110442 / TA 4).